A 560-amino-acid chain; its full sequence is Glutamate--tRNA ligase (560 aa).

The 'HIGH' region signature appears at 108–118 (PNPSGPLHLGH).

It belongs to the class-I aminoacyl-tRNA synthetase family. Glutamate--tRNA ligase type 2 subfamily.

It localises to the cytoplasm. The catalysed reaction is tRNA(Glu) + L-glutamate + ATP = L-glutamyl-tRNA(Glu) + AMP + diphosphate. Functionally, catalyzes the attachment of glutamate to tRNA(Glu) in a two-step reaction: glutamate is first activated by ATP to form Glu-AMP and then transferred to the acceptor end of tRNA(Glu). The sequence is that of Glutamate--tRNA ligase from Methanocorpusculum labreanum (strain ATCC 43576 / DSM 4855 / Z).